The chain runs to 122 residues: Large ribosomal subunit protein uL14c (122 aa).

The protein belongs to the universal ribosomal protein uL14 family. Part of the 50S ribosomal subunit.

The protein resides in the plastid. Its subcellular location is the chloroplast. Binds to 23S rRNA. This is Large ribosomal subunit protein uL14c from Staurastrum punctulatum (Green alga).